The sequence spans 122 residues: Large ribosomal subunit protein uL14 (122 aa).

The protein belongs to the universal ribosomal protein uL14 family. As to quaternary structure, part of the 50S ribosomal subunit. Forms a cluster with proteins L3 and L19. In the 70S ribosome, L14 and L19 interact and together make contacts with the 16S rRNA in bridges B5 and B8.

In terms of biological role, binds to 23S rRNA. Forms part of two intersubunit bridges in the 70S ribosome. The sequence is that of Large ribosomal subunit protein uL14 from Bradyrhizobium sp. (strain BTAi1 / ATCC BAA-1182).